The following is a 369-amino-acid chain: MASLQEANGSTAWPPPTASNISEPHQCLLLLYEDIGSSRVRYWDLLLLIPNVLFFIFLLWKLPLARAKIRVTSSPIFITFYILVFVVALVGIARAVVSMTVSASDAATVADKILWEITRFFLLAIELSVIILGLAFGHLESKSSIKRVLAITTVLSLAYSVTQGTLEILYPDSHLSAEDFNIYGHGGRQFWLVSSCFFFLVYSLVVILPKTPLKERVSLPSRRSFYVYAGILATLNLLQGLGSALLCANIIVGLCCVDATTFLYFSFFAPLIYVAFLRGFFGSEPKILFSYKCQVDEAEEPDMHLPQPYAVARREGIESAGPACASAANYSSTQFDSAGVAYLDDIASMPCHTGSINSTDSERWKAINA.

The N-linked (GlcNAc...) asparagine glycan is linked to asparagine 20. 7 helical membrane-spanning segments follow: residues 45 to 65 (LLLL…LPLA), 73 to 93 (SSPI…VGIA), 120 to 140 (FFLL…GHLE), 148 to 168 (VLAI…TLEI), 189 to 209 (QFWL…VILP), 237 to 257 (LLQG…LCCV), and 262 to 282 (FLYF…GFFG). Asparagine 329 carries N-linked (GlcNAc...) asparagine glycosylation.

Belongs to the UPF0359 family. As to expression, ubiquitous, with higher levels in heart, brain, lung, liver and kidney.

It is found in the membrane. The chain is Transmembrane protein adipocyte-associated 1 (Tpra1) from Mus musculus (Mouse).